The primary structure comprises 269 residues: Small ribosomal subunit protein uS2 (269 aa).

Positions 228–269 (ARAERQAAAAKDAAGDTGKSEADAEAVKAEAAAEEKAETTEA) are disordered. The span at 233-244 (QAAAAKDAAGDT) shows a compositional bias: low complexity. The span at 245–269 (GKSEADAEAVKAEAAAEEKAETTEA) shows a compositional bias: basic and acidic residues.

Belongs to the universal ribosomal protein uS2 family.

The protein is Small ribosomal subunit protein uS2 of Corynebacterium urealyticum (strain ATCC 43042 / DSM 7109).